Reading from the N-terminus, the 63-residue chain is MAQTCDLCGRGPAFGNRISHAHNVTKRRWNINLQSVRALVNGAGRRMRVCTSCIRNNKVQKVA.

Belongs to the bacterial ribosomal protein bL28 family.

The polypeptide is Large ribosomal subunit protein bL28 (Solibacter usitatus (strain Ellin6076)).